The sequence spans 317 residues: Thymidylate synthase (317 aa).

Residues R40 and 167 to 168 (RR) contribute to the dUMP site. Residue C187 is the Nucleophile of the active site. DUMP contacts are provided by residues 216 to 219 (RSCD), N227, and 257 to 259 (HVY). D219 lines the (6R)-5,10-methylene-5,6,7,8-tetrahydrofolate pocket.

The protein belongs to the thymidylate synthase family. Homodimer.

The enzyme catalyses dUMP + (6R)-5,10-methylene-5,6,7,8-tetrahydrofolate = 7,8-dihydrofolate + dTMP. The protein operates within pyrimidine metabolism; dTTP biosynthesis. The chain is Thymidylate synthase (TMP1) from Cryptococcus neoformans var. neoformans serotype D (strain B-3501A) (Filobasidiella neoformans).